A 199-amino-acid polypeptide reads, in one-letter code: uncharacterized protein (199 aa).

3 consecutive transmembrane segments (helical) span residues 27-47, 55-75, and 172-192; these read LIKI…PILA, LLTL…VAAL, and LLLL…VLLL.

The protein resides in the cell membrane. This is an uncharacterized protein from Synechocystis sp. (strain ATCC 27184 / PCC 6803 / Kazusa).